A 118-amino-acid chain; its full sequence is Appetite-regulating hormone (118 aa).

An N-terminal signal peptide occupies residues 1-24 (MPSTGTICSLLLLSVLLMADLAMA). A lipid anchor (O-decanoyl serine; alternate) is attached at serine 27. Residue serine 27 is the site of O-hexanoyl serine; alternate attachment. The O-octanoyl serine; alternate moiety is linked to residue serine 27. The segment at 29 to 50 (LSPEHQKVQQRKESKKPAAKLK) is disordered. Basic and acidic residues predominate over residues 32–44 (EHQKVQQRKESKK). The propeptide at 53 to 76 (ALEGWLGPEDSGEVEGTEDKLEIR) is removed in mature form. Leucine amide is present on leucine 99. A propeptide spans 100–118 (GKFLQDILWEEVTEAPADK) (removed in mature form).

The protein belongs to the motilin family. O-octanoylated by GOAT/MBOAT4. O-octanoylation is essential for ghrelin activity. Post-translationally, amidation of Leu-99 is essential for obestatin activity.

The protein resides in the secreted. In terms of biological role, ghrelin is the ligand for growth hormone secretagogue receptor type 1 (GHSR). Induces the release of growth hormone from the pituitary. Has an appetite-stimulating effect, induces adiposity and stimulates gastric acid secretion. Involved in growth regulation. Functionally, obestatin may be the ligand for GPR39. May have an appetite-reducing effect resulting in decreased food intake. May reduce gastric emptying activity and jejunal motility. This Sus scrofa (Pig) protein is Appetite-regulating hormone (GHRL).